The primary structure comprises 610 residues: WD repeat-containing protein 46 (610 aa).

The tract at residues 1–103 (METAPKPGKD…TQDPFPGPAP (103 aa)) is disordered. A compositionally biased stretch (basic and acidic residues) spans 7 to 19 (PGKDVPPKKDKLQ). Ser-41 bears the Phosphoserine mark. Residues 65 to 77 (KKSRISKKPQVPK) are compositionally biased toward basic residues. WD repeat units lie at residues 193–234 (LRQF…CEIN), 235–272 (VMEAVRDIRFLHSEALLAVAQNRWLHIYDNQGIELHCI), 274–312 (RCDRVTRLEFLPFHFLLATASETGFLTYLDVSVGKIVAA), 315–354 (ARAGRLDVMSQNPYNAVIHLGHSNGTVSLWSPAMKEPLAK), 357–396 (CHRGGVRAVAVDSTGTYMATSGLDHQLKIFDLRGTYQPLS), and 399–436 (TLPHGAGHLAFSQRGLLVAGMGDVVNIWAGQGKASPPS). Positions 538–610 (ERLGYDPQAK…RPSALDRFVR (73 aa)) are disordered. Basic and acidic residues predominate over residues 572–582 (VMDEEHRDKVR).

Part of the small subunit (SSU) processome, composed of more than 70 proteins and the RNA chaperone small nucleolar RNA (snoRNA) U3. Interacts with DDX21, NCL, NOP2 and EBNA1BP2.

The protein resides in the nucleus. It is found in the nucleolus. Scaffold component of the nucleolar structure. Required for localization of DDX21 and NCL to the granular compartment of the nucleolus. Part of the small subunit (SSU) processome, first precursor of the small eukaryotic ribosomal subunit. During the assembly of the SSU processome in the nucleolus, many ribosome biogenesis factors, an RNA chaperone and ribosomal proteins associate with the nascent pre-rRNA and work in concert to generate RNA folding, modifications, rearrangements and cleavage as well as targeted degradation of pre-ribosomal RNA by the RNA exosome. In Homo sapiens (Human), this protein is WD repeat-containing protein 46 (WDR46).